The chain runs to 261 residues: Cytochrome c oxidase subunit 3 (261 aa).

Residues 1–15 are Mitochondrial matrix-facing; the sequence is MAHQAHAYHMVDPSP. A helical membrane pass occupies residues 16–34; sequence WPLTGAIAALLLTSGTAVW. At 35-40 the chain is on the mitochondrial intermembrane side; it reads FHFHSL. Residues 41-66 form a helical membrane-spanning segment; that stretch reads TLLTMGNILLLLTMYQWWRDIIREGT. Residues 67–72 lie on the Mitochondrial matrix side of the membrane; it reads FQGHHT. The chain crosses the membrane as a helical span at residues 73-105; it reads PPVQKGLRYGMILFITSEVFFFLGFFWAFYHSS. Residues 106–128 are Mitochondrial intermembrane-facing; the sequence is LSPTPELGGCWPPTGIITLDPFE. Residues 129–152 traverse the membrane as a helical segment; it reads VPLLNTAVLLASGVTVTWAHHSIM. Residues 153–155 are Mitochondrial matrix-facing; it reads EGE. Residues 156–183 traverse the membrane as a helical segment; sequence RKQTIQALTLTILLGFYFTFLQGMEYYE. The Mitochondrial intermembrane portion of the chain corresponds to 184 to 190; it reads APFTIAD. A helical transmembrane segment spans residues 191–223; sequence GVYGSTFFVATGFHGLHVIIGSTFLAICLLRQI. Residues 224–232 are Mitochondrial matrix-facing; that stretch reads QYHFTSEHH. The helical transmembrane segment at 233 to 256 threads the bilayer; it reads FGFEAAAWYWHFVDVVWLFLYVSI. The Mitochondrial intermembrane segment spans residues 257–261; that stretch reads YWWGS.

The protein belongs to the cytochrome c oxidase subunit 3 family. As to quaternary structure, component of the cytochrome c oxidase (complex IV, CIV), a multisubunit enzyme composed of 14 subunits. The complex is composed of a catalytic core of 3 subunits MT-CO1, MT-CO2 and MT-CO3, encoded in the mitochondrial DNA, and 11 supernumerary subunits COX4I, COX5A, COX5B, COX6A, COX6B, COX6C, COX7A, COX7B, COX7C, COX8 and NDUFA4, which are encoded in the nuclear genome. The complex exists as a monomer or a dimer and forms supercomplexes (SCs) in the inner mitochondrial membrane with NADH-ubiquinone oxidoreductase (complex I, CI) and ubiquinol-cytochrome c oxidoreductase (cytochrome b-c1 complex, complex III, CIII), resulting in different assemblies (supercomplex SCI(1)III(2)IV(1) and megacomplex MCI(2)III(2)IV(2)).

It is found in the mitochondrion inner membrane. The enzyme catalyses 4 Fe(II)-[cytochrome c] + O2 + 8 H(+)(in) = 4 Fe(III)-[cytochrome c] + 2 H2O + 4 H(+)(out). In terms of biological role, component of the cytochrome c oxidase, the last enzyme in the mitochondrial electron transport chain which drives oxidative phosphorylation. The respiratory chain contains 3 multisubunit complexes succinate dehydrogenase (complex II, CII), ubiquinol-cytochrome c oxidoreductase (cytochrome b-c1 complex, complex III, CIII) and cytochrome c oxidase (complex IV, CIV), that cooperate to transfer electrons derived from NADH and succinate to molecular oxygen, creating an electrochemical gradient over the inner membrane that drives transmembrane transport and the ATP synthase. Cytochrome c oxidase is the component of the respiratory chain that catalyzes the reduction of oxygen to water. Electrons originating from reduced cytochrome c in the intermembrane space (IMS) are transferred via the dinuclear copper A center (CU(A)) of subunit 2 and heme A of subunit 1 to the active site in subunit 1, a binuclear center (BNC) formed by heme A3 and copper B (CU(B)). The BNC reduces molecular oxygen to 2 water molecules using 4 electrons from cytochrome c in the IMS and 4 protons from the mitochondrial matrix. This chain is Cytochrome c oxidase subunit 3 (mt-co3), found in Salmo salar (Atlantic salmon).